The primary structure comprises 97 residues: UPF0390 protein CNBD1430 (97 aa).

Disordered regions lie at residues 1–57 (MAQG…INNS) and 75–97 (RNVG…GKSR). The span at 29-46 (GKREVAPKDRQRVLERSQ) shows a compositional bias: basic and acidic residues. The span at 48–57 (KQLSSKINNS) shows a compositional bias: polar residues.

The protein belongs to the UPF0390 family.

This is UPF0390 protein CNBD1430 from Cryptococcus neoformans var. neoformans serotype D (strain B-3501A) (Filobasidiella neoformans).